A 214-amino-acid polypeptide reads, in one-letter code: Probable transaldolase (214 aa).

Lysine 83 acts as the Schiff-base intermediate with substrate in catalysis.

The protein belongs to the transaldolase family. Type 3B subfamily.

It localises to the cytoplasm. It carries out the reaction D-sedoheptulose 7-phosphate + D-glyceraldehyde 3-phosphate = D-erythrose 4-phosphate + beta-D-fructose 6-phosphate. It functions in the pathway carbohydrate degradation; pentose phosphate pathway; D-glyceraldehyde 3-phosphate and beta-D-fructose 6-phosphate from D-ribose 5-phosphate and D-xylulose 5-phosphate (non-oxidative stage): step 2/3. In terms of biological role, transaldolase is important for the balance of metabolites in the pentose-phosphate pathway. In Geotalea daltonii (strain DSM 22248 / JCM 15807 / FRC-32) (Geobacter daltonii), this protein is Probable transaldolase.